Consider the following 673-residue polypeptide: Capsid protein (673 aa).

Positions 575-595 (NLPTDSSLESDSDSEPAPKKK) are disordered.

It belongs to the anelloviridae capsid protein family.

Its subcellular location is the virion. In terms of biological role, self-assembles to form an icosahedral capsid with a T=1 symmetry, about 30 nm in diameter, and consisting of 60 capsid proteins. The capsid encapsulates the genomic DNA. Capsid protein is involved in attachment and entry into the host cell. The sequence is that of Capsid protein from Homo sapiens (Human).